The following is a 506-amino-acid chain: Lysine--tRNA ligase (506 aa).

Positions 416 and 423 each coordinate Mg(2+).

Belongs to the class-II aminoacyl-tRNA synthetase family. Homodimer. Requires Mg(2+) as cofactor.

It localises to the cytoplasm. It carries out the reaction tRNA(Lys) + L-lysine + ATP = L-lysyl-tRNA(Lys) + AMP + diphosphate. The polypeptide is Lysine--tRNA ligase (Xylella fastidiosa (strain M12)).